Reading from the N-terminus, the 160-residue chain is Large ribosomal subunit protein eL21 (160 aa).

The protein belongs to the eukaryotic ribosomal protein eL21 family.

In Encephalitozoon cuniculi (strain GB-M1) (Microsporidian parasite), this protein is Large ribosomal subunit protein eL21 (RPL21).